A 217-amino-acid chain; its full sequence is NADPH-dependent 3-demethoxyubiquinone 3-hydroxylase, mitochondrial (217 aa).

The transit peptide at 1 to 35 (MSCAGAAAAPRLWRLRPGARRSLSAYGRRTSVRFR) directs the protein to the mitochondrion. The segment at 11–29 (RLWRLRPGARRSLSAYGRR) is required for nuclear localization. Repeat copies occupy residues 48–129 (AVDR…TALL) and 130–217 (GKEG…SERL). Residues 48–217 (AVDRIIRVDH…RVAIYLSERL (170 aa)) form a 2 X approximate tandem repeats region. Arginine 51 contributes to the NADH binding site. 6 residues coordinate Fe cation: glutamate 60, glutamate 90, histidine 93, glutamate 142, glutamate 178, and histidine 181. 2 residues coordinate NADH: tyrosine 212 and arginine 216.

Belongs to the COQ7 family. Component of a multi-subunit COQ enzyme complex. Interacts with COQ8B and COQ6. Interacts with COQ9. Requires Fe cation as cofactor. In terms of tissue distribution, expressed dominantly in heart and skeletal muscle.

Its subcellular location is the mitochondrion inner membrane. The protein resides in the mitochondrion. It localises to the nucleus. The protein localises to the chromosome. The enzyme catalyses a 5-methoxy-2-methyl-3-(all-trans-polyprenyl)benzoquinone + NADH + O2 = a 3-demethylubiquinone + NAD(+) + H2O. The protein operates within cofactor biosynthesis; ubiquinone biosynthesis. Its function is as follows. Catalyzes the hydroxylation of the 5-methoxy-2-methyl-3-(all-trans-polyprenyl)benzoquinone at the C6 position and participates in the biosynthesis of ubiquinone. Catalyzes the reaction through a substrate-mediated reduction pathway, whereby NADH shuttles electrons to 5-methoxy-2-methyl-3-(all-trans-decaprenyl)benzoquinone, which then transfers the electrons to the two Fe(3+) centers. The binding of 5-methoxy-2-methyl-3-(all-trans-polyprenyl)benzoquinone (DMQn) mediates reduction of the diiron center by nicotinamide adenine dinucleotide (NADH) and initiates oxygen activation for subsequent DMQ hydroxylation. The physiological substrates are 5-methoxy-2-methyl-3-(all-trans-nonaprenyl)benzoquinone (DMQ(9)) and 5-methoxy-2-methyl-3-(all-trans-decaprenyl)benzoquinone (DMQ(10)), however in vitro the enzyme does not have any specificity concerning the length of the polyprenyl tail, and accepts tails of various lengths with similar efficiency. Also has a structural role in the COQ enzyme complex, stabilizing other COQ polypeptides. Involved in lifespan determination in a ubiquinone-independent manner. Plays a role in modulating mitochondrial stress responses, acting in the nucleus, perhaps via regulating gene expression, independent of its characterized mitochondrial function in ubiquinone biosynthesis. The chain is NADPH-dependent 3-demethoxyubiquinone 3-hydroxylase, mitochondrial from Homo sapiens (Human).